The primary structure comprises 558 residues: MKNINPTKTKSWKSLKKHFLNINTTHILDLFKQNKYRFLSFSTIFNNEILLDYSKNLITEETINKLIDLAKECDLPGAIKSMFQGAKINRSENRAVLHTALRNRKNIPILVDGHDIMPNINTVLEKMKIFCQNIIQGYWKGYTNKNITDIVNIGIGGSNLGPHMVTEALTPYKNHLNIHFVSNIDGTHLFEVLKKINPETTLFLITSKTFTTQETMTNAFSARNWFVQKITKSSSFNHYEQHISKHFIALSANPVEVKKFGINPSTNMFEFWEWVGGRYSLWSSVGLSIMLSLGSNHFESLLDGAYAMDMHFKNTPLNKNIPVILALIGIWYNNFFLSETEAIFPYDQYMHRFAAYIQQSNMESNGKCVDRNGYPINYQTGPIVWGESGTNGQHSFFQLIHQGTKMIPCDFIAPVLSHHPIFDHHDKLIANFLAQTKALAFGKKLEEITQEYITKKQSYIYDLNILPFKVFKGNNPSNSILIKKITPYTLGALIALYEHKIFTQGVIFNIYTFDQWGVELGKQLADDIYSILKQTNINPQYDSSTNGLINYYKYWSQA.

Glu363 (proton donor) is an active-site residue. Residues His394 and Lys522 contribute to the active site.

It belongs to the GPI family.

The protein resides in the cytoplasm. It carries out the reaction alpha-D-glucose 6-phosphate = beta-D-fructose 6-phosphate. Its pathway is carbohydrate biosynthesis; gluconeogenesis. It functions in the pathway carbohydrate degradation; glycolysis; D-glyceraldehyde 3-phosphate and glycerone phosphate from D-glucose: step 2/4. In terms of biological role, catalyzes the reversible isomerization of glucose-6-phosphate to fructose-6-phosphate. In Blochmanniella floridana, this protein is Glucose-6-phosphate isomerase.